The following is a 509-amino-acid chain: 3-ketoacyl-CoA synthase 11 (509 aa).

Helical transmembrane passes span 36–56 (LITH…AAQI) and 75–95 (LISV…YFMT). The 290-residue stretch at 92-381 (YFMTRPRPVY…FFATLVGRKL (290 aa)) folds into the FAE domain. Residues Cys-236, His-315, His-399, His-403, and Asn-436 contribute to the active site.

This sequence belongs to the thiolase-like superfamily. Chalcone/stilbene synthases family. Only expressed in guard cells. Expressed in siliques, flowers, leaves, stems, roots and seedlings.

It localises to the membrane. It carries out the reaction a very-long-chain acyl-CoA + malonyl-CoA + H(+) = a very-long-chain 3-oxoacyl-CoA + CO2 + CoA. It functions in the pathway lipid metabolism; fatty acid biosynthesis. Active on both saturated and mono-unsaturated acyl chains C16 to C20. The sequence is that of 3-ketoacyl-CoA synthase 11 from Arabidopsis thaliana (Mouse-ear cress).